The chain runs to 293 residues: Glutamyl-Q tRNA(Asp) synthetase (293 aa).

L-glutamate is bound by residues R8 to T12 and E44. The 'HIGH' region signature appears at P11–S21. Zn(2+) contacts are provided by C100, C102, Y114, and C118. Residues Y171 and R189 each contribute to the L-glutamate site. The 'KMSKS' region motif lies at K227 to S231. K230 is an ATP binding site.

Belongs to the class-I aminoacyl-tRNA synthetase family. GluQ subfamily. Requires Zn(2+) as cofactor.

In terms of biological role, catalyzes the tRNA-independent activation of glutamate in presence of ATP and the subsequent transfer of glutamate onto a tRNA(Asp). Glutamate is transferred on the 2-amino-5-(4,5-dihydroxy-2-cyclopenten-1-yl) moiety of the queuosine in the wobble position of the QUC anticodon. This is Glutamyl-Q tRNA(Asp) synthetase from Pseudomonas aeruginosa (strain ATCC 15692 / DSM 22644 / CIP 104116 / JCM 14847 / LMG 12228 / 1C / PRS 101 / PAO1).